Here is a 510-residue protein sequence, read N- to C-terminus: GTPase Der (510 aa).

EngA-type G domains follow at residues 4 to 168 (PVVA…AEKM) and 222 to 395 (IKIA…ACAT). GTP is bound by residues 10–17 (GRPNVGKS), 57–61 (DTGGI), 120–123 (NKTD), 228–235 (GRPNVGKS), 275–279 (DTAGV), and 340–343 (NKWD). Residues 396–480 (QKMTTSMLTR…PIRLLFQEGN (85 aa)) enclose the KH-like domain.

The protein belongs to the TRAFAC class TrmE-Era-EngA-EngB-Septin-like GTPase superfamily. EngA (Der) GTPase family. Associates with the 50S ribosomal subunit.

Functionally, GTPase that plays an essential role in the late steps of ribosome biogenesis. The protein is GTPase Der of Pasteurella multocida (strain Pm70).